Consider the following 441-residue polypeptide: Glutamyl-tRNA reductase (441 aa).

Substrate-binding positions include 47 to 50 (TCNR), Ser104, 109 to 111 (EAQ), and Gln115. Cys48 acts as the Nucleophile in catalysis. 184-189 (GAGEMG) contacts NADP(+).

Belongs to the glutamyl-tRNA reductase family. As to quaternary structure, homodimer.

The catalysed reaction is (S)-4-amino-5-oxopentanoate + tRNA(Glu) + NADP(+) = L-glutamyl-tRNA(Glu) + NADPH + H(+). The protein operates within porphyrin-containing compound metabolism; protoporphyrin-IX biosynthesis; 5-aminolevulinate from L-glutamyl-tRNA(Glu): step 1/2. Its function is as follows. Catalyzes the NADPH-dependent reduction of glutamyl-tRNA(Glu) to glutamate 1-semialdehyde (GSA). The polypeptide is Glutamyl-tRNA reductase (Myxococcus xanthus (strain DK1622)).